We begin with the raw amino-acid sequence, 1270 residues long: DNA-directed RNA polymerase subunit beta (1270 aa).

It belongs to the RNA polymerase beta chain family. In terms of assembly, the RNAP catalytic core consists of 2 alpha, 1 beta, 1 beta' and 1 omega subunit. When a sigma factor is associated with the core the holoenzyme is formed, which can initiate transcription.

It carries out the reaction RNA(n) + a ribonucleoside 5'-triphosphate = RNA(n+1) + diphosphate. Its function is as follows. DNA-dependent RNA polymerase catalyzes the transcription of DNA into RNA using the four ribonucleoside triphosphates as substrates. The chain is DNA-directed RNA polymerase subunit beta from Phocaeicola vulgatus (strain ATCC 8482 / DSM 1447 / JCM 5826 / CCUG 4940 / NBRC 14291 / NCTC 11154) (Bacteroides vulgatus).